The sequence spans 87 residues: Large ribosomal subunit protein bL31B (87 aa).

This sequence belongs to the bacterial ribosomal protein bL31 family. Type B subfamily. In terms of assembly, part of the 50S ribosomal subunit.

The polypeptide is Large ribosomal subunit protein bL31B (Pseudomonas aeruginosa (strain LESB58)).